A 254-amino-acid polypeptide reads, in one-letter code: MPASRRVLIAGNWKMNGLKSSLAEIEALAAGYDGDLKAKLDLLVCPPATLLISAAERLAGSGVQLGGQNCHPAPAGAHTGGISAEMLKDAGVTSVIVGHSERRTNLSESDAVVMAKVKAAWCFGLLPIVCVGETAEERDAGEAVGVVTRQVHQSLPEGCTASNLVIAYEPVWAIGTGRTPTPEDVANIHGTIRSVLRSQFGAEADGIRILYGGSVKPDNAATLMAVADVDGALVGGASLKAADFLAIARATPAR.

12-14 (NWK) is a binding site for substrate. His-99 (electrophile) is an active-site residue. Glu-169 functions as the Proton acceptor in the catalytic mechanism. Substrate-binding positions include Gly-175, Ser-214, and 235-236 (GG).

This sequence belongs to the triosephosphate isomerase family. Homodimer.

Its subcellular location is the cytoplasm. It carries out the reaction D-glyceraldehyde 3-phosphate = dihydroxyacetone phosphate. It functions in the pathway carbohydrate biosynthesis; gluconeogenesis. The protein operates within carbohydrate degradation; glycolysis; D-glyceraldehyde 3-phosphate from glycerone phosphate: step 1/1. In terms of biological role, involved in the gluconeogenesis. Catalyzes stereospecifically the conversion of dihydroxyacetone phosphate (DHAP) to D-glyceraldehyde-3-phosphate (G3P). This chain is Triosephosphate isomerase, found in Xanthobacter autotrophicus (strain ATCC BAA-1158 / Py2).